The following is a 63-amino-acid chain: DNA gyrase inhibitor YacG (63 aa).

Cys-9, Cys-12, Cys-28, and Cys-32 together coordinate Zn(2+).

It belongs to the DNA gyrase inhibitor YacG family. In terms of assembly, interacts with GyrB. It depends on Zn(2+) as a cofactor.

In terms of biological role, inhibits all the catalytic activities of DNA gyrase by preventing its interaction with DNA. Acts by binding directly to the C-terminal domain of GyrB, which probably disrupts DNA binding by the gyrase. In Salmonella arizonae (strain ATCC BAA-731 / CDC346-86 / RSK2980), this protein is DNA gyrase inhibitor YacG.